A 454-amino-acid polypeptide reads, in one-letter code: Bifunctional protein GlmU (454 aa).

The segment at 1–232 (MTDRTCLSIV…VDNVIGINNR (232 aa)) is pyrophosphorylase. UDP-N-acetyl-alpha-D-glucosamine-binding positions include 11–14 (LAAG), K25, Q78, and 83–84 (GT). D108 contributes to the Mg(2+) binding site. The UDP-N-acetyl-alpha-D-glucosamine site is built by G144, E158, N173, and N230. Position 230 (N230) interacts with Mg(2+). The linker stretch occupies residues 233-253 (VELAEAEAIWQQRKRREMMLA). Residues 254–454 (GVTLIAPETV…AIKAAKTATK (201 aa)) are N-acetyltransferase. The UDP-N-acetyl-alpha-D-glucosamine site is built by R319 and K337. H349 (proton acceptor) is an active-site residue. Y352 and N363 together coordinate UDP-N-acetyl-alpha-D-glucosamine. Acetyl-CoA contacts are provided by residues A366, 372-373 (NY), S391, S409, and R426.

In the N-terminal section; belongs to the N-acetylglucosamine-1-phosphate uridyltransferase family. The protein in the C-terminal section; belongs to the transferase hexapeptide repeat family. Homotrimer. The cofactor is Mg(2+).

Its subcellular location is the cytoplasm. It carries out the reaction alpha-D-glucosamine 1-phosphate + acetyl-CoA = N-acetyl-alpha-D-glucosamine 1-phosphate + CoA + H(+). The enzyme catalyses N-acetyl-alpha-D-glucosamine 1-phosphate + UTP + H(+) = UDP-N-acetyl-alpha-D-glucosamine + diphosphate. It participates in nucleotide-sugar biosynthesis; UDP-N-acetyl-alpha-D-glucosamine biosynthesis; N-acetyl-alpha-D-glucosamine 1-phosphate from alpha-D-glucosamine 6-phosphate (route II): step 2/2. It functions in the pathway nucleotide-sugar biosynthesis; UDP-N-acetyl-alpha-D-glucosamine biosynthesis; UDP-N-acetyl-alpha-D-glucosamine from N-acetyl-alpha-D-glucosamine 1-phosphate: step 1/1. Its pathway is bacterial outer membrane biogenesis; LPS lipid A biosynthesis. Its function is as follows. Catalyzes the last two sequential reactions in the de novo biosynthetic pathway for UDP-N-acetylglucosamine (UDP-GlcNAc). The C-terminal domain catalyzes the transfer of acetyl group from acetyl coenzyme A to glucosamine-1-phosphate (GlcN-1-P) to produce N-acetylglucosamine-1-phosphate (GlcNAc-1-P), which is converted into UDP-GlcNAc by the transfer of uridine 5-monophosphate (from uridine 5-triphosphate), a reaction catalyzed by the N-terminal domain. This is Bifunctional protein GlmU from Brucella anthropi (strain ATCC 49188 / DSM 6882 / CCUG 24695 / JCM 21032 / LMG 3331 / NBRC 15819 / NCTC 12168 / Alc 37) (Ochrobactrum anthropi).